A 473-amino-acid polypeptide reads, in one-letter code: Bifunctional protein GlmU (473 aa).

Residues 1–226 (MRAPVAVVIL…AGEASGINDL (226 aa)) form a pyrophosphorylase region. Residues 10–13 (LAAG), Lys-24, Gln-75, 80–81 (GT), 102–104 (YGD), Gly-136, Glu-151, Asn-166, and Asn-224 contribute to the UDP-N-acetyl-alpha-D-glucosamine site. Asp-104 lines the Mg(2+) pocket. A Mg(2+)-binding site is contributed by Asn-224. The interval 227 to 247 (VQLAEVEEAFQRRWARRLLQG) is linker. Residues 248-473 (GLRLVAPHRF…TPASGGAKEE (226 aa)) are N-acetyltransferase. UDP-N-acetyl-alpha-D-glucosamine-binding residues include Arg-330 and Lys-348. His-360 (proton acceptor) is an active-site residue. Residues Tyr-363 and Asn-374 each contribute to the UDP-N-acetyl-alpha-D-glucosamine site. Acetyl-CoA-binding positions include Ala-377, 383–384 (NY), Ser-402, Ala-420, and Arg-437. The interval 439–473 (RARTIPGWQHPGLTGRRGPPDDNDATPASGGAKEE) is disordered.

It in the N-terminal section; belongs to the N-acetylglucosamine-1-phosphate uridyltransferase family. In the C-terminal section; belongs to the transferase hexapeptide repeat family. In terms of assembly, homotrimer. Mg(2+) serves as cofactor.

It is found in the cytoplasm. It catalyses the reaction alpha-D-glucosamine 1-phosphate + acetyl-CoA = N-acetyl-alpha-D-glucosamine 1-phosphate + CoA + H(+). It carries out the reaction N-acetyl-alpha-D-glucosamine 1-phosphate + UTP + H(+) = UDP-N-acetyl-alpha-D-glucosamine + diphosphate. It participates in nucleotide-sugar biosynthesis; UDP-N-acetyl-alpha-D-glucosamine biosynthesis; N-acetyl-alpha-D-glucosamine 1-phosphate from alpha-D-glucosamine 6-phosphate (route II): step 2/2. Its pathway is nucleotide-sugar biosynthesis; UDP-N-acetyl-alpha-D-glucosamine biosynthesis; UDP-N-acetyl-alpha-D-glucosamine from N-acetyl-alpha-D-glucosamine 1-phosphate: step 1/1. It functions in the pathway bacterial outer membrane biogenesis; LPS lipid A biosynthesis. Functionally, catalyzes the last two sequential reactions in the de novo biosynthetic pathway for UDP-N-acetylglucosamine (UDP-GlcNAc). The C-terminal domain catalyzes the transfer of acetyl group from acetyl coenzyme A to glucosamine-1-phosphate (GlcN-1-P) to produce N-acetylglucosamine-1-phosphate (GlcNAc-1-P), which is converted into UDP-GlcNAc by the transfer of uridine 5-monophosphate (from uridine 5-triphosphate), a reaction catalyzed by the N-terminal domain. The chain is Bifunctional protein GlmU from Halorhodospira halophila (strain DSM 244 / SL1) (Ectothiorhodospira halophila (strain DSM 244 / SL1)).